Consider the following 1316-residue polypeptide: DNA-directed RNA polymerase subunit beta' (1316 aa).

Residues C60, C62, C75, and C78 each coordinate Zn(2+). D535, D537, and D539 together coordinate Mg(2+). Zn(2+) contacts are provided by C891, C968, C975, and C978.

The protein belongs to the RNA polymerase beta' chain family. As to quaternary structure, the RNAP catalytic core consists of 2 alpha, 1 beta, 1 beta' and 1 omega subunit. When a sigma factor is associated with the core the holoenzyme is formed, which can initiate transcription. Mg(2+) serves as cofactor. Requires Zn(2+) as cofactor.

It catalyses the reaction RNA(n) + a ribonucleoside 5'-triphosphate = RNA(n+1) + diphosphate. In terms of biological role, DNA-dependent RNA polymerase catalyzes the transcription of DNA into RNA using the four ribonucleoside triphosphates as substrates. In Mycobacterium ulcerans (strain Agy99), this protein is DNA-directed RNA polymerase subunit beta'.